A 661-amino-acid polypeptide reads, in one-letter code: Tegument protein UL46 homolog (661 aa).

The disordered stretch occupies residues 1 to 31; sequence MFSRFARSFSSDDRTRKSYDGSYQSFNAGER. The segment covering 10 to 19 has biased composition (basic and acidic residues); that stretch reads SSDDRTRKSY. Helical transmembrane passes span 299 to 319 and 339 to 359; these read AGTGVAFILAATTASALTALL and AAIVAAVELITLLHHHFQYLI.

Belongs to the herpesviridae HHV-1 VP11/12 protein family. Post-translationally, phosphorylated by host LCK. The phosphorylation seems to be lymphocyte-specific.

Its subcellular location is the virion tegument. It is found in the host cytoplasm. It localises to the host membrane. Plays a role in the activation of the host PI3K/AKT pathway to promote cell survival. Interacts with and activates PI3KR1 in order to phosphorylate host AKT on its activating residues. Activates the host AP-1 pathway by triggering phosphorylation of host ERK1/2. Participates in host BIM and BAD phosphorylation, leading to apoptosis inhibition. The polypeptide is Tegument protein UL46 homolog (Varicella-zoster virus (strain Oka vaccine) (HHV-3)).